We begin with the raw amino-acid sequence, 435 residues long: 5-methylthioadenosine/S-adenosylhomocysteine deaminase (435 aa).

The Zn(2+) site is built by His-65 and His-67. The substrate site is built by Glu-94, Arg-150, and His-189. Residue His-216 participates in Zn(2+) binding. 2 residues coordinate substrate: Glu-219 and Asp-304. Residue Asp-304 coordinates Zn(2+).

It belongs to the metallo-dependent hydrolases superfamily. MTA/SAH deaminase family. Zn(2+) is required as a cofactor.

The enzyme catalyses S-adenosyl-L-homocysteine + H2O + H(+) = S-inosyl-L-homocysteine + NH4(+). The catalysed reaction is S-methyl-5'-thioadenosine + H2O + H(+) = S-methyl-5'-thioinosine + NH4(+). In terms of biological role, catalyzes the deamination of 5-methylthioadenosine and S-adenosyl-L-homocysteine into 5-methylthioinosine and S-inosyl-L-homocysteine, respectively. Is also able to deaminate adenosine. The sequence is that of 5-methylthioadenosine/S-adenosylhomocysteine deaminase from Bacillus cereus (strain ZK / E33L).